Consider the following 485-residue polypeptide: MQIYNSLSRRKELFTPAVPGKVNMYVCGITAYDLCHIGHARSAVVFDVLVRYLRHTGLDVTFARNFTDVDDKIIKRANEEGLTSQQVAEKYIDTFYEDMDRLNVLRADIEPKATGHILEMIALCEKLIAKGKAYATPSGDVYFRVRSFPEYGKLSGRDIDDMRSGARVAPGEEKEDPLDFALWKSAKPGEPSWTSPWGEGRPGWHIECSAMSEKHMPLPLDIHGGGQDLIFPHHENEIAQTEAALDKPFVRYWMHNGFVQVDAEKMSKSLGNFKTIRDILEGYLPEVLRFFLLTKHYRSPIDFTFDSMDEAEKSLKRIYEALSLARTERGRSKWSATPLPADVTAEFDTLDRAFDEALEDDLNTAAALGHVFGTIRLVNRLLEDKNLRKSAETLALLERLDGLVAKWMKVLGVFGREPEAFLSDLKECRIRRKGIDTTKVDALLEERKSVRAAKDFARADAIRDELAALGIEVRDTPSGAVWDVL.

Residue Cys-27 coordinates Zn(2+). The 'HIGH' region signature appears at 29–39; sequence ITAYDLCHIGH. The Zn(2+) site is built by Cys-208, His-233, and Glu-237. The short motif at 265–269 is the 'KMSKS' region element; it reads KMSKS. An ATP-binding site is contributed by Lys-268.

Belongs to the class-I aminoacyl-tRNA synthetase family. Monomer. It depends on Zn(2+) as a cofactor.

It localises to the cytoplasm. The catalysed reaction is tRNA(Cys) + L-cysteine + ATP = L-cysteinyl-tRNA(Cys) + AMP + diphosphate. The polypeptide is Cysteine--tRNA ligase (Nitratidesulfovibrio vulgaris (strain DP4) (Desulfovibrio vulgaris)).